A 141-amino-acid polypeptide reads, in one-letter code: Large ribosomal subunit protein uL11A (141 aa).

Belongs to the universal ribosomal protein uL11 family. In terms of assembly, part of the ribosomal stalk of the 50S ribosomal subunit. Interacts with L10 and the large rRNA to form the base of the stalk. L10 forms an elongated spine to which L12 dimers bind in a sequential fashion forming a multimeric L10(L12)X complex. Post-translationally, one or more lysine residues are methylated.

In terms of biological role, forms part of the ribosomal stalk which helps the ribosome interact with GTP-bound translation factors. This Halalkalibacterium halodurans (strain ATCC BAA-125 / DSM 18197 / FERM 7344 / JCM 9153 / C-125) (Bacillus halodurans) protein is Large ribosomal subunit protein uL11A.